A 523-amino-acid polypeptide reads, in one-letter code: MILHTYIILSLLTIFPKAIGLSLQMPMALEASYASLVEKATLAVGQEIDAIQKGIQQGWLEVETRFPTIVSQLSYSTGPKFAIKKKDATFWDFYVESQELPNYRLRVKRNNPEVLKVDFTKQYSGYLDVEADDKHFFYWFFESRNDPQNDPIILWLNGGPGCSSLTGLFFELGSSRINENLKPIFNPYSWNGNASIIYLDQPVNVGFSYSSSSVSNTVVAGEDVYAFLQLFFQHFPEYQTNDFHIAGESYAGHYIPVFADEILSQKNRNFNLTSVLIGNGLTDPLTQYRYYEPMACGEGGAPSVLPADECENMLVTQDKCLSLIQACYDSQSAFTCAPAAIYCNNAQMGPYQRTGKNVYDIRKECDGGSLCYKDLEFIDTYLNQKFVQDALGAEVDTYESCNFEINRNFLFAGDWMKPYHEHVSSLLNKGLPVLIYAGDKDFICNWLGNRAWTDVLPWVDADGFEKAEVQDWLVNGRKAGEFKNYSNFTYLRVYDAGHMAPYDQPENSHEMVNRWISGDFSFH.

An N-terminal signal peptide occupies residues 1-20 (MILHTYIILSLLTIFPKAIG). Positions 21–107 (LSLQMPMALE…QELPNYRLRV (87 aa)) are excised as a propeptide. 5 cysteine pairs are disulfide-bonded: Cys-162/Cys-401, Cys-296/Cys-310, Cys-320/Cys-343, Cys-327/Cys-336, and Cys-365/Cys-371. Residue Asn-193 is glycosylated (N-linked (GlcNAc...) asparagine). The active site involves Ser-249. The N-linked (GlcNAc...) asparagine glycan is linked to Asn-271. Asp-441 is a catalytic residue. Residues Asn-484 and Asn-487 are each glycosylated (N-linked (GlcNAc...) asparagine). Residue His-498 is part of the active site.

It belongs to the peptidase S10 family.

The protein resides in the vacuole. The catalysed reaction is Release of a C-terminal amino acid with broad specificity.. Involved in degradation of small peptides. This chain is Carboxypeptidase Y (PRC1), found in Komagataella phaffii (strain GS115 / ATCC 20864) (Yeast).